We begin with the raw amino-acid sequence, 267 residues long: 4-hydroxy-tetrahydrodipicolinate reductase (267 aa).

Residues 12–17, 100–102, and 126–129 contribute to the NAD(+) site; these read GPRGRM, GTT, and APNF. The active-site Proton donor/acceptor is histidine 156. (S)-2,3,4,5-tetrahydrodipicolinate is bound at residue histidine 157. The Proton donor role is filled by lysine 160. 166–167 contributes to the (S)-2,3,4,5-tetrahydrodipicolinate binding site; sequence GT.

It belongs to the DapB family.

Its subcellular location is the cytoplasm. The enzyme catalyses (S)-2,3,4,5-tetrahydrodipicolinate + NAD(+) + H2O = (2S,4S)-4-hydroxy-2,3,4,5-tetrahydrodipicolinate + NADH + H(+). It catalyses the reaction (S)-2,3,4,5-tetrahydrodipicolinate + NADP(+) + H2O = (2S,4S)-4-hydroxy-2,3,4,5-tetrahydrodipicolinate + NADPH + H(+). It functions in the pathway amino-acid biosynthesis; L-lysine biosynthesis via DAP pathway; (S)-tetrahydrodipicolinate from L-aspartate: step 4/4. Functionally, catalyzes the conversion of 4-hydroxy-tetrahydrodipicolinate (HTPA) to tetrahydrodipicolinate. The chain is 4-hydroxy-tetrahydrodipicolinate reductase from Bacillus velezensis (strain DSM 23117 / BGSC 10A6 / LMG 26770 / FZB42) (Bacillus amyloliquefaciens subsp. plantarum).